A 674-amino-acid chain; its full sequence is MNQYQNKNEYEILESSQNNMNMPNRYPFADDPNAVMKNGNYKDWVNECEGSNISPSPAAAITSKIVSIVLKTLAKAVASSLADSIKSSLGISKTITENNVSQVSMVQVHQIINRRIQETILDLGESSLNGLVAIYNRDYLGALEAWNNNKSNINYQTNVAEAFKTVEREFFTKLKGIYRTSSSQITLLPTFTQAANLHLSMLRDAVMYQEGWNLQSHINYSKELDDALEDYTNYCVEVYTKGLNALRGSTAIDWLEFNSFRRDMTLMVLDLVAIFPNYNPVRYPLSTKISLSRKIYTDPVGRTDSPSFGDWTNTGRTLANFNDLEREVTDSPSLVKWLGDMTIYTGAIDSYRPTSPGDRIGVWYGNINAFYHTGRTDVVMFRQTGDTAYEDPSTFISNILYDDIYKLDLRAAAVSTIQGAMDTTFGVSSSRFFDIRGRNQLYQSNKPYPSLPITITFPGEESSEGNANDYSHLLCDVKILQEDSSNICEGRSSLLSHAWTHASLDRNNTILPDEITQIPAVTAYELRGNSSVVAGPGSTGGDLVKMSYHSVWSFKVYCSELKNYRVRIRYASHGNCQFLMKRWPSTGVAPRQWARHNVQGTFSNSMRYEAFKYLDIFTITPEENNFAFTIDLESGGDLFIDKIEFIPVSGSAFEYEGKQNIEKTQKAVNDLFIN.

It belongs to the delta endotoxin family.

Its function is as follows. Promotes colloidosmotic lysis by binding to the midgut epithelial cells of insects. The protein is Pesticidal crystal protein Cry24Aa (cry24Aa) of Bacillus thuringiensis subsp. jegathesan.